Here is a 40-residue protein sequence, read N- to C-terminus: Proteinase inhibitor IIB (40 aa).

Intrachain disulfides connect cysteine 2/cysteine 16, cysteine 6/cysteine 28, and cysteine 12/cysteine 38.

Belongs to the protease inhibitor I20 (potato type II proteinase inhibitor) family.

It localises to the secreted. Functionally, inhibits chymotrypsin and subtilisin strongly. The protein is Proteinase inhibitor IIB of Solanum tuberosum (Potato).